The chain runs to 1512 residues: Lysophospholipase NTE1 (1512 aa).

The Cytoplasmic segment spans residues 1 to 48 (MAAPDAMTSLVKSSVALLSSAHESLPTSLAAMKTAETAPSSTFGILGR). The chain crosses the membrane as a helical span at residues 49–69 (VILSILSVLPTLLFWVSYTLP). The Lumenal portion of the chain corresponds to 70-83 (TWLFTLFSMSLTFT). Residues 84–104 (MNFTTLMLVLVFVVSTISYFV) traverse the membrane as a helical segment. Residues 105–1512 (RYRYLTMYAR…RTMAPRRASI (1408 aa)) lie on the Cytoplasmic side of the membrane. Disordered stretches follow at residues 204–230 (NREE…QAHR), 262–362 (RHDE…AHPD), 534–556 (TQMS…QHDV), and 740–770 (TEDD…KRSR). The span at 208-217 (SDSDEDDGEL) shows a compositional bias: acidic residues. The span at 268–291 (GPSSSTPMSPQHRPSMTRNSSFNM) shows a compositional bias: polar residues. Residues 343–358 (HSKQRRSPSRSTKPKS) show a composition bias toward basic residues. Low complexity predominate over residues 537–549 (SRGTGRSGRSSFS). Residues 669 to 793 (LSAS…SNRS) and 830 to 950 (RLTT…IASR) contribute to the a nucleoside 3',5'-cyclic phosphate site. The span at 751–761 (PTATNTSLRNG) shows a compositional bias: polar residues. The 165-residue stretch at 1209 to 1373 (LVLGGGGARG…IDNLTVAHMK (165 aa)) folds into the PNPLA domain. The short motif at 1213–1218 (GGGARG) is the GXGXXG element. The GXSXG signature appears at 1240–1244 (GTSIG). Ser-1242 acts as the Nucleophile in catalysis. Asp-1360 functions as the Proton acceptor in the catalytic mechanism. The short motif at 1360–1362 (DGG) is the DGA/G element.

Belongs to the NTE family.

Its subcellular location is the endoplasmic reticulum membrane. It carries out the reaction a 1-acyl-sn-glycero-3-phosphocholine + H2O = sn-glycerol 3-phosphocholine + a fatty acid + H(+). Inhibited by organophosphorus esters. Intracellular phospholipase B that catalyzes the double deacylation of phosphatidylcholine (PC) to glycerophosphocholine (GroPCho). Plays an important role in membrane lipid homeostasis. Responsible for the rapid PC turnover in response to inositol, elevated temperatures, or when choline is present in the growth medium. The sequence is that of Lysophospholipase NTE1 (NTE1) from Phaeosphaeria nodorum (strain SN15 / ATCC MYA-4574 / FGSC 10173) (Glume blotch fungus).